We begin with the raw amino-acid sequence, 391 residues long: Lipid-A-disaccharide synthase (391 aa).

It belongs to the LpxB family.

It catalyses the reaction a lipid X + a UDP-2-N,3-O-bis[(3R)-3-hydroxyacyl]-alpha-D-glucosamine = a lipid A disaccharide + UDP + H(+). It functions in the pathway bacterial outer membrane biogenesis; LPS lipid A biosynthesis. Functionally, condensation of UDP-2,3-diacylglucosamine and 2,3-diacylglucosamine-1-phosphate to form lipid A disaccharide, a precursor of lipid A, a phosphorylated glycolipid that anchors the lipopolysaccharide to the outer membrane of the cell. The polypeptide is Lipid-A-disaccharide synthase (Azoarcus sp. (strain BH72)).